The primary structure comprises 1960 residues: Myosin-9 (1960 aa).

An N-acetylalanine modification is found at Ala-2. Positions Ala-2–Leu-838 are mediates interaction with LIMCH1. Lys-8 is modified (N6-acetyllysine). Tyr-11 bears the Phosphotyrosine mark. Residues Ala-27–Pro-77 form the Myosin N-terminal SH3-like domain. One can recognise a Myosin motor domain in the interval Ser-81–Asp-776. An N6-acetyllysine modification is found at Lys-102. Residue Gly-174–Thr-181 coordinates ATP. N6-acetyllysine occurs at positions 299, 435, and 613. Ser-628 bears the Phosphoserine mark. Positions Leu-654–His-676 are actin-binding. Tyr-754 is subject to Phosphotyrosine. The 30-residue stretch at Ile-779 to Ala-808 folds into the IQ domain. Positions Leu-837–Leu-1926 form a coiled coil. Lys-850 bears the N6-succinyllysine mark. Lys-860, Lys-975, and Lys-1024 each carry N6-acetyllysine. Position 1114 is a phosphoserine (Ser-1114). The tract at residues Gln-1117 to Leu-1137 is disordered. Over residues Ser-1122–Leu-1137 the composition is skewed to basic and acidic residues. An N6-acetyllysine mark is found at Lys-1234, Lys-1249, Lys-1357, Lys-1392, Lys-1404, Lys-1410, Lys-1459, and Lys-1638. Lys-1669 is modified (N6-succinyllysine). Ser-1714 bears the Phosphoserine mark. Lys-1793, Lys-1802, and Lys-1845 each carry N6-acetyllysine. Positions Arg-1877 to Lys-1918 are disordered. Position 1923 is an omega-N-methylarginine (Arg-1923). The segment at Val-1934–Glu-1960 is disordered. Residue Ser-1943 is modified to Phosphoserine. A compositionally biased stretch (basic and acidic residues) spans Asp-1948–Glu-1960.

Belongs to the TRAFAC class myosin-kinesin ATPase superfamily. Myosin family. In terms of assembly, myosin is a hexameric protein that consists of 2 heavy chain subunits (MHC), 2 alkali light chain subunits (MLC) and 2 regulatory light chain subunits (MLC-2). Interacts with RASIP1. Interacts with DDR1. Interacts with PDLIM2. Interacts with SVIL. Interacts with HTRA3. Interacts with Myo7a. Interacts with CFAP95. Interacts with LIMCH1; independently of the integration of MYH9 into the myosin complex. Interacts with RAB3A. Interacts with ZBED4. Interacts with S100A4; this interaction increases cell motility. Post-translationally, ISGylated. In terms of processing, ubiquitination.

The protein resides in the cytoplasm. It localises to the cytoskeleton. It is found in the cell cortex. The protein localises to the cytoplasmic vesicle. Its subcellular location is the secretory vesicle. The protein resides in the cortical granule. Cellular myosin that appears to play a role in cytokinesis, cell shape, and specialized functions such as secretion and capping. Required for cortical actin clearance prior to oocyte exocytosis. Promotes cell motility in conjunction with S100A4. During cell spreading, plays an important role in cytoskeleton reorganization, focal contact formation (in the margins but not the central part of spreading cells), and lamellipodial retraction; this function is mechanically antagonized by MYH10. In Canis lupus familiaris (Dog), this protein is Myosin-9 (MYH9).